The primary structure comprises 880 residues: Alanine--tRNA ligase (880 aa).

Residues histidine 567, histidine 571, cysteine 669, and histidine 673 each contribute to the Zn(2+) site.

It belongs to the class-II aminoacyl-tRNA synthetase family. Requires Zn(2+) as cofactor.

Its subcellular location is the cytoplasm. It catalyses the reaction tRNA(Ala) + L-alanine + ATP = L-alanyl-tRNA(Ala) + AMP + diphosphate. Catalyzes the attachment of alanine to tRNA(Ala) in a two-step reaction: alanine is first activated by ATP to form Ala-AMP and then transferred to the acceptor end of tRNA(Ala). Also edits incorrectly charged Ser-tRNA(Ala) and Gly-tRNA(Ala) via its editing domain. The polypeptide is Alanine--tRNA ligase (Bacillus cereus (strain ATCC 14579 / DSM 31 / CCUG 7414 / JCM 2152 / NBRC 15305 / NCIMB 9373 / NCTC 2599 / NRRL B-3711)).